The sequence spans 319 residues: Nucleotide-binding protein Rru_A3448 (319 aa).

The interval 1 to 34 (MGRSASLLRLRDPAPLPTDIAPDPAEAPPSPAAD) is disordered. Residue 42–49 (GMSGAGRT) participates in ATP binding. 90-93 (DTRT) serves as a coordination point for GTP.

The protein belongs to the RapZ-like family.

Functionally, displays ATPase and GTPase activities. This is Nucleotide-binding protein Rru_A3448 from Rhodospirillum rubrum (strain ATCC 11170 / ATH 1.1.1 / DSM 467 / LMG 4362 / NCIMB 8255 / S1).